Here is a 317-residue protein sequence, read N- to C-terminus: MASLNPSAKELHLLYVLTDSNLPTGGFVSSSGLESFAKHGFLSSQYSYTPKEFKDGVLGKKNMTGGLVDFARAEVSNYASTTGGFVMDGWTCVNDSRKASKAGNGIIEDEVQRVLQKIQALDKYHECTLLSHVGRRSSKAQGVAMLTLFSRGLSRPVGIDEYLNEDGGGPGSTDELGVKIVEGYKKMVILEKAPGHLAVCWGVITAALGLPVDRALHLHLFLHARSLLSSAVRLNIIGPYASSQLLLHPYRDIINQEVEKLSNCTTGIIEDKAEKCGEEEDLWAWTEDAEKGPATTWPLGEVLMGRHDIQHSRIFNS.

The protein belongs to the UreF family. In terms of assembly, URE4, URE6 and URE7 may form a complex that acts as a GTP-hydrolysis-dependent molecular chaperone, activating the urease apoprotein URE1.

Urease accessory protein required for the maturation and activation of urease via the functional incorporation of the urease nickel metallocenter. Plays a role in host brain invasion. In Cryptococcus neoformans var. grubii serotype A (strain H99 / ATCC 208821 / CBS 10515 / FGSC 9487) (Filobasidiella neoformans var. grubii), this protein is Urease accessory protein 6.